The chain runs to 165 residues: Small ribosomal subunit protein uS5 (165 aa).

Positions 13–76 constitute an S5 DRBM domain; sequence LEEKVLVVNR…EAARKNLITI (64 aa).

It belongs to the universal ribosomal protein uS5 family. In terms of assembly, part of the 30S ribosomal subunit. Contacts proteins S4 and S8.

With S4 and S12 plays an important role in translational accuracy. Functionally, located at the back of the 30S subunit body where it stabilizes the conformation of the head with respect to the body. This Chlamydia caviae (strain ATCC VR-813 / DSM 19441 / 03DC25 / GPIC) (Chlamydophila caviae) protein is Small ribosomal subunit protein uS5.